The primary structure comprises 447 residues: Phosphoglucosamine mutase (447 aa).

Serine 103 acts as the Phosphoserine intermediate in catalysis. Mg(2+)-binding residues include serine 103, aspartate 242, aspartate 244, and aspartate 246. Serine 103 is modified (phosphoserine).

This sequence belongs to the phosphohexose mutase family. Requires Mg(2+) as cofactor. Post-translationally, activated by phosphorylation.

The catalysed reaction is alpha-D-glucosamine 1-phosphate = D-glucosamine 6-phosphate. In terms of biological role, catalyzes the conversion of glucosamine-6-phosphate to glucosamine-1-phosphate. The chain is Phosphoglucosamine mutase from Cereibacter sphaeroides (strain ATCC 17023 / DSM 158 / JCM 6121 / CCUG 31486 / LMG 2827 / NBRC 12203 / NCIMB 8253 / ATH 2.4.1.) (Rhodobacter sphaeroides).